A 291-amino-acid polypeptide reads, in one-letter code: Zinc transporter ZupT (291 aa).

The next 8 membrane-spanning stretches (helical) occupy residues 8–28, 39–59, 74–94, 147–167, 174–194, 209–229, 233–253, and 271–291; these read IFIA…GSII, VLSL…FMEI, HWAE…SLLI, GIFT…ATFI, TLGI…GLAV, FIYS…GALI, FIGD…MVFI, and SLYG…LLGQ. Residues Asn-158 and Glu-161 each contribute to the Fe(2+) site. Positions 161 and 186 each coordinate Zn(2+). The Fe(2+) site is built by Asn-187, Glu-190, and Glu-219. Glu-190 contacts Zn(2+).

It belongs to the ZIP transporter (TC 2.A.5) family. ZupT subfamily.

Its subcellular location is the cell inner membrane. It catalyses the reaction Zn(2+)(in) = Zn(2+)(out). Mediates zinc uptake. May also transport other divalent cations. The polypeptide is Zinc transporter ZupT (Campylobacter jejuni subsp. jejuni serotype O:2 (strain ATCC 700819 / NCTC 11168)).